A 203-amino-acid chain; its full sequence is Orotate phosphoribosyltransferase (203 aa).

5-phospho-alpha-D-ribose 1-diphosphate-binding positions include R94, K95, K98, H100, and 119–127 (DDVATTGGS). Residues T123 and R151 each contribute to the orotate site.

Belongs to the purine/pyrimidine phosphoribosyltransferase family. PyrE subfamily. In terms of assembly, homodimer. Mg(2+) serves as cofactor.

It carries out the reaction orotidine 5'-phosphate + diphosphate = orotate + 5-phospho-alpha-D-ribose 1-diphosphate. It functions in the pathway pyrimidine metabolism; UMP biosynthesis via de novo pathway; UMP from orotate: step 1/2. Catalyzes the transfer of a ribosyl phosphate group from 5-phosphoribose 1-diphosphate to orotate, leading to the formation of orotidine monophosphate (OMP). The chain is Orotate phosphoribosyltransferase from Staphylothermus marinus (strain ATCC 43588 / DSM 3639 / JCM 9404 / F1).